The following is a 301-amino-acid chain: D-alanine--D-alanine ligase (301 aa).

The ATP-grasp domain occupies 102-295 (KAVFAAAGLP…FPALCAWMVE (194 aa)). An ATP-binding site is contributed by 128–181 (PLPRPYVIKPVNEGSSVGVFILREGDNRRADIARAWRHGSVAMTEEYVPGRELT). Residues aspartate 248, glutamate 262, and asparagine 264 each coordinate Mg(2+).

The protein belongs to the D-alanine--D-alanine ligase family. Mg(2+) is required as a cofactor. It depends on Mn(2+) as a cofactor.

Its subcellular location is the cytoplasm. It carries out the reaction 2 D-alanine + ATP = D-alanyl-D-alanine + ADP + phosphate + H(+). The protein operates within cell wall biogenesis; peptidoglycan biosynthesis. Its function is as follows. Cell wall formation. This is D-alanine--D-alanine ligase from Acidiphilium cryptum (strain JF-5).